The primary structure comprises 638 residues: MLDFFTIFSKGGLVLWCFQGVSDSCTGPVNALIRSVLLQERGGNNSFTHEALTLKYKLDNQFELVFVVGFQKILTLTYVDKLIDDVHRLFRDKYRTEIQQQSALSLLNGTFDFQNDFLRLLREREESSKIRAPTTMKKFEDSEKAKKPVRSMIETRGEKPKEKAKNSKKKGAKKESSDGPLATGKAVPAEKSGLPAGPENGVELSKEELIRRKREEFIQKHGRGLEKSSKSTKSDAPKEKGKKAPRVWALGGCANKEVLDYSAPTTNGAPDAAPPEDINLIRGTGPGGQLQDLDCSSSDDEETAQNASKPSATKGTLGGMFGMLKGLVGSKSLSREDMESVLDKMRDHLIAKNVAADIAVQLCESVANKLEGKVMGTFSTVTSTVKQALQESLVQILQPQRRVDMLRDIMDAQRHQRPYVVTFCGVNGVGKSTNLAKISFWLLENGFSVLIAACDTFRAGAVEHVRTHTRRLSALHPPEKHAGPTMVQLFEKGYGKDAAGIAMEAIAFARNQGFDVVLVDTAGRMQDNAPLMTALAKLITVNTPDLVLFVGEALVGNEAVDQLVKFNRALADHSMAQTPRLIDGIVLTKFDTIDDKVGAAISMTYITSKPIVFVGTGQTYCDLRSLNAKAVVAALMKA.

Disordered regions lie at residues 129–205, 218–245, and 262–315; these read KIRA…VELS, IQKH…KKAP, and SAPT…ATKG. 2 stretches are compositionally biased toward basic and acidic residues: residues 137-146 and 153-165; these read KKFEDSEKAK and IETR…EKAK. Position 177 is a phosphoserine (Ser177). The span at 218–239 shows a compositional bias: basic and acidic residues; sequence IQKHGRGLEKSSKSTKSDAPKE. Thr284 carries the phosphothreonine modification. A phosphoserine mark is found at Ser296, Ser297, and Ser298. The span at 304-314 shows a compositional bias: polar residues; the sequence is AQNASKPSATK. Residues 419–636 form an NG domain region; it reads YVVTFCGVNG…NAKAVVAALM (218 aa). 425 to 432 lines the GTP pocket; that stretch reads GVNGVGKS. Ser473 is modified (phosphoserine). 520–524 provides a ligand contact to GTP; that stretch reads DTAGR. Thr578 carries the phosphothreonine modification. Residue 588–591 coordinates GTP; sequence TKFD.

It belongs to the GTP-binding SRP family. As to quaternary structure, heterodimer with SRPRB. Interacts with the signal recognition particle (SRP) complex subunit SRP54.

The protein localises to the endoplasmic reticulum membrane. In terms of biological role, component of the SRP (signal recognition particle) receptor. Ensures, in conjunction with the signal recognition particle, the correct targeting of the nascent secretory proteins to the endoplasmic reticulum membrane system. Forms a guanosine 5'-triphosphate (GTP)-dependent complex with the SRP subunit SRP54. SRP receptor compaction and GTPase rearrangement drive SRP-mediated cotranslational protein translocation into the ER. In Canis lupus familiaris (Dog), this protein is Signal recognition particle receptor subunit alpha.